The chain runs to 318 residues: MTCPIILDCDPGHDDAIALILALAHPDLVPLAVTTSAGNQTPDKTLNNALRILTLLNRSDIPVAGGAAKPLARDLIIADNVHGETGLDGPALPNPSFSPQAITAVELMAQQIRKSHQPVTLIPTGPLTNIALLLASHSELHDKIERIVLMGGAAGVGNWTPAAEFNIFVDPEAADIVFKSGIPITMCGLDVTHQAQIMDEDIERIRAIPNPVAKCVAELLDFFMIYHRDPKWGFVGAPLHDPCTIAWLLKPELFDAQDCWVGIETQSELTLGMTVVDRYQLTGKPANATVLFGLNRQGFVDLLVHSLAAYTPTYLNRR.

Residue His-240 is part of the active site.

Belongs to the IUNH family. RihA subfamily.

Hydrolyzes cytidine or uridine to ribose and cytosine or uracil, respectively. This chain is Pyrimidine-specific ribonucleoside hydrolase RihA, found in Shewanella oneidensis (strain ATCC 700550 / JCM 31522 / CIP 106686 / LMG 19005 / NCIMB 14063 / MR-1).